The primary structure comprises 672 residues: UvrABC system protein B (672 aa).

Residues 26-183 enclose the Helicase ATP-binding domain; that stretch reads EGLEDGLAHQ…RRLSELQYVR (158 aa). 39-46 provides a ligand contact to ATP; the sequence is GVTGSGKT. The short motif at 92–115 is the Beta-hairpin element; the sequence is YYDYYQPEAYVPSSDTFIEKDASV. The Helicase C-terminal domain maps to 431–597; it reads QVDDLLSEIN…ALNKKVTDIL (167 aa). The segment at 601-623 is disordered; the sequence is DGPVRSRTKGARGQRAAEPHPDY. In terms of domain architecture, UVR spans 632-667; it reads EQQIQRLETQMYQHAQNLEFEQAAALRDEIHILREQ.

This sequence belongs to the UvrB family. As to quaternary structure, forms a heterotetramer with UvrA during the search for lesions. Interacts with UvrC in an incision complex.

The protein localises to the cytoplasm. Its function is as follows. The UvrABC repair system catalyzes the recognition and processing of DNA lesions. A damage recognition complex composed of 2 UvrA and 2 UvrB subunits scans DNA for abnormalities. Upon binding of the UvrA(2)B(2) complex to a putative damaged site, the DNA wraps around one UvrB monomer. DNA wrap is dependent on ATP binding by UvrB and probably causes local melting of the DNA helix, facilitating insertion of UvrB beta-hairpin between the DNA strands. Then UvrB probes one DNA strand for the presence of a lesion. If a lesion is found the UvrA subunits dissociate and the UvrB-DNA preincision complex is formed. This complex is subsequently bound by UvrC and the second UvrB is released. If no lesion is found, the DNA wraps around the other UvrB subunit that will check the other stand for damage. The protein is UvrABC system protein B of Edwardsiella ictaluri (strain 93-146).